The chain runs to 383 residues: WAT1-related protein At3g18200 (383 aa).

A compositionally biased stretch (basic residues) spans methionine 1–arginine 16. The segment at methionine 1 to lysine 23 is disordered. 10 consecutive transmembrane segments (helical) span residues valine 33–serine 53, valine 65–phenylalanine 85, proline 91–alanine 111, threonine 126–leucine 146, glycine 158–tyrosine 178, leucine 204–leucine 224, threonine 237–valine 257, leucine 272–tryptophan 292, valine 300–isoleucine 320, and leucine 325–tryptophan 345. 2 EamA domains span residues phenylalanine 44–threonine 173 and leucine 216–leucine 344.

This sequence belongs to the drug/metabolite transporter (DMT) superfamily. Plant drug/metabolite exporter (P-DME) (TC 2.A.7.4) family.

Its subcellular location is the membrane. This is WAT1-related protein At3g18200 from Arabidopsis thaliana (Mouse-ear cress).